Here is a 209-residue protein sequence, read N- to C-terminus: A-type ATP synthase subunit D (209 aa).

The protein belongs to the V-ATPase D subunit family. In terms of assembly, has multiple subunits, A(3), B(3), C, D, E, F, G, I and K(x); there may be a few other subunits as well.

Its subcellular location is the cell membrane. Its function is as follows. Component of the A-type ATP synthase that produces ATP from ADP in the presence of a proton gradient across the membrane. This Methanosarcina mazei (strain ATCC BAA-159 / DSM 3647 / Goe1 / Go1 / JCM 11833 / OCM 88) (Methanosarcina frisia) protein is A-type ATP synthase subunit D.